The sequence spans 460 residues: Cysteine--tRNA ligase (460 aa).

Residue cysteine 28 coordinates Zn(2+). Residues 30-40 (NTVYDFCHIGH) carry the 'HIGH' region motif. Positions 209, 234, and 238 each coordinate Zn(2+). The 'KMSKS' region motif lies at 266–270 (KMSKS). Lysine 269 is a binding site for ATP.

This sequence belongs to the class-I aminoacyl-tRNA synthetase family. In terms of assembly, monomer. Zn(2+) serves as cofactor.

It is found in the cytoplasm. It carries out the reaction tRNA(Cys) + L-cysteine + ATP = L-cysteinyl-tRNA(Cys) + AMP + diphosphate. This is Cysteine--tRNA ligase from Marinomonas sp. (strain MWYL1).